We begin with the raw amino-acid sequence, 89 residues long: Small ribosomal subunit protein uS15 (89 aa).

The protein belongs to the universal ribosomal protein uS15 family. In terms of assembly, part of the 30S ribosomal subunit. Forms a bridge to the 50S subunit in the 70S ribosome, contacting the 23S rRNA.

One of the primary rRNA binding proteins, it binds directly to 16S rRNA where it helps nucleate assembly of the platform of the 30S subunit by binding and bridging several RNA helices of the 16S rRNA. Its function is as follows. Forms an intersubunit bridge (bridge B4) with the 23S rRNA of the 50S subunit in the ribosome. This chain is Small ribosomal subunit protein uS15, found in Parvibaculum lavamentivorans (strain DS-1 / DSM 13023 / NCIMB 13966).